We begin with the raw amino-acid sequence, 145 residues long: Acidic phospholipase A2 1 (145 aa).

Positions 1–21 are cleaved as a signal peptide; the sequence is MYPAHLLVLLAVCVSLLGATA. The propeptide occupies 22–27; it reads IPPLPL. 7 cysteine pairs are disulfide-bonded: Cys38–Cys98, Cys54–Cys144, Cys56–Cys72, Cys71–Cys125, Cys78–Cys118, Cys87–Cys111, and Cys105–Cys116. Ca(2+) contacts are provided by Tyr55, Gly57, and Gly59. His75 is a catalytic residue. Asp76 contacts Ca(2+). Residue Asp119 is part of the active site.

This sequence belongs to the phospholipase A2 family. Group I subfamily. D49 sub-subfamily. In terms of assembly, monomer. Ca(2+) is required as a cofactor. Expressed by the venom gland.

It is found in the secreted. It catalyses the reaction a 1,2-diacyl-sn-glycero-3-phosphocholine + H2O = a 1-acyl-sn-glycero-3-phosphocholine + a fatty acid + H(+). In terms of biological role, PLA2 catalyzes the calcium-dependent hydrolysis of the 2-acyl groups in 3-sn-phosphoglycerides. The polypeptide is Acidic phospholipase A2 1 (Laticauda semifasciata (Black-banded sea krait)).